We begin with the raw amino-acid sequence, 155 residues long: Large ribosomal subunit protein uL16m (155 aa).

Belongs to the universal ribosomal protein uL16 family.

It localises to the mitochondrion. This is Large ribosomal subunit protein uL16m (RPL16) from Petunia hybrida (Petunia).